A 146-amino-acid polypeptide reads, in one-letter code: Decarboxylase dmxR15 (146 aa).

Positions 31–126 constitute an EthD domain; that stretch reads PGMSEGDYRN…MHDHEVFADT (96 aa).

Belongs to the tpcK family.

It carries out the reaction atrochrysone carboxylate + H(+) = atrochrysone + CO2. It functions in the pathway secondary metabolite biosynthesis. In terms of biological role, decarboxylase; part of the gene cluster that mediates the biosynthesis of the dimeric xanthones cryptosporioptides. The pathway begins with the synthesis of atrochrysone thioester by the polyketide synthase dmx-nrPKS. The atrochrysone carboxyl ACP thioesterase dmxR1 then breaks the thioester bond and releases the atrochrysone carboxylic acid from dmx-nrPKS. Atrochrysone carboxylic acid is decarboxylated by the decarboxylase dmxR15, and oxidized by the anthrone oxygenase dmxR16 to yield emodin. Emodin is then reduced to emodin hydroquinone by the oxidoreductase dmxR7. A-ring reduction by the short chain dehydrogenase dmxR18, dehydration by the scytalone dehydratase-like protein dmxR17 and probable spontaneous re-oxidation, results in overall deoxygenation to chrysophanol. Baeyer-Villiger oxidation by the Baeyer-Villiger monooxygenase (BVMO) dmxR6 then yields monodictylactone in equilibrium with monodictyphenone. In the case of the cryptosporioptides biosynthesis, monodictylactone is reduced at C-12 to an alcohol (by the short chain dehydrogenases dmxR12 or dmxR8) and hydroxylated at C-5 by dmxR9, yielding the electron-rich aromatic which could eliminate H(2)O to form the ortho-quinonemethide, followed by tautomerisation to paraquinone and complete the formal reduction to produce the 10-methylgroup. Conjugate addition of C-4a-OH to the resulting paraquinone by the monooxygenase dmxR10 then gives cyclohexadienone, which is then reduced at C-5 by the short chain dehydrogenase dmxR3 to give the dihydroxanthone. The 6,7-epoxide in the cryptosporioptides could be introduced by the cytochrome P450 monooxygenase dmxL3. The highly reducing PKS dmxL2 manufactures butyrate, which is further carboxylated by dmxL1 to form ethylmalonate. It is not yet clear whether the carboxylation occurs while the butyrate is attached to the ACP of dmxL2, but this unusual fungal metabolite could then be esterified to O-5 by the O-acetyltransferase dmxR13. Finally, dimerization performed by dmxR5 gives the observed dimers cryptosporioptides A, B and C as the final products of the pathway. The polypeptide is Decarboxylase dmxR15 (Cryptosporiopsis sp. (strain 8999)).